A 166-amino-acid polypeptide reads, in one-letter code: Cyclic pyranopterin monophosphate synthase (166 aa).

Substrate is bound by residues Leu-83–His-85 and Met-121–Glu-122. The active site involves Asp-136.

The protein belongs to the MoaC family. In terms of assembly, homohexamer; trimer of dimers.

It carries out the reaction (8S)-3',8-cyclo-7,8-dihydroguanosine 5'-triphosphate = cyclic pyranopterin phosphate + diphosphate. Its pathway is cofactor biosynthesis; molybdopterin biosynthesis. Its function is as follows. Catalyzes the conversion of (8S)-3',8-cyclo-7,8-dihydroguanosine 5'-triphosphate to cyclic pyranopterin monophosphate (cPMP). This chain is Cyclic pyranopterin monophosphate synthase, found in Rhodospirillum rubrum (strain ATCC 11170 / ATH 1.1.1 / DSM 467 / LMG 4362 / NCIMB 8255 / S1).